Reading from the N-terminus, the 382-residue chain is Mannitol-1-phosphate 5-dehydrogenase (382 aa).

3 to 14 (ALHFGAGNIGRG) contributes to the NAD(+) binding site. Lysine 269 carries the N6-acetyllysine modification.

It belongs to the mannitol dehydrogenase family.

The catalysed reaction is D-mannitol 1-phosphate + NAD(+) = beta-D-fructose 6-phosphate + NADH + H(+). This chain is Mannitol-1-phosphate 5-dehydrogenase, found in Escherichia coli O7:K1 (strain IAI39 / ExPEC).